The primary structure comprises 962 residues: Spliceosome associated factor 3, U4/U6 recycling protein (962 aa).

Residues 1–21 (MATTAASSASEPEVEPQAGPE) are compositionally biased toward low complexity. Residues 1–92 (MATTAASSAS…EDEWEYDEEE (92 aa)) form a disordered region. Position 2 is an N-acetylalanine (Ala-2). A mediates interaction with PRPF3 region spans residues 2–352 (ATTAASSASE…LVPDLWIRYS (351 aa)). A Phosphoserine modification is found at Ser-10. The segment covering 81-92 (AGEDEWEYDEEE) has biased composition (acidic residues). HAT repeat units follow at residues 127–159 (GELSRVRAARQKMSELFPLTEELWLEWLHDEIS), 165–196 (LDREHVYELFERAVKDYICPNIWLEYGQYSVG), 202–238 (GGLEKVRSVFERALSSVGLHMTKGLAIWEAYREFESA), 243–276 (ARLEKVHSLFRRQLAIPLYEMEATFAEYEEWSEE), 325–357 (GDPARIQLIFERALVENCLVPDLWIRYSQYLDR), 360–392 (KVKDLVLSVHSRAVRNCPWTVALWSRYLLAMER), 395–431 (LDHQTISATFENALSAGFIQATDYVEIWQVYLDYLRR), 441–474 (KELEELRSMFTRALEYLQQEVEERFSESGDPSCL), and 488–521 (NNMQKARELWDSIMTRGNAKYANMWLEYYNLERA). At Ser-216 the chain carries Phosphoserine. Residues 488 to 521 (NNMQKARELWDSIMTRGNAKYANMWLEYYNLERA) are required for interaction with USP4. The tract at residues 538–952 (CTSDYPEHVC…VATEAPKMSN (415 aa)) is necessary and sufficient for U6 snRNA binding. A coiled-coil region spans residues 559–618 (TLEDWDLAIQKTETRLARVNEQRMKAAEKEAALVQQEEEKAEQRKKVRAEKKALKKKKKT). Positions 591-602 (LVQQEEEKAEQR) are enriched in basic and acidic residues. A disordered region spans residues 591–696 (LVQQEEEKAE…SLKRDMPKVA (106 aa)). The tract at residues 601–670 (QRKKVRAEKK…KEETELSGKC (70 aa)) is required for nuclear localization. The Nuclear localization signal signature appears at 602-609 (RKKVRAEK). Residues 603-618 (KKVRAEKKALKKKKKT) show a composition bias toward basic residues. Positions 627 to 640 (DEDEENEWGEEEEE) are enriched in acidic residues. Position 651 is a phosphoserine (Ser-651). Positions 680 to 696 (KQKEKAASLKRDMPKVA) are enriched in basic and acidic residues. The 79-residue stretch at 704–782 (VTVFVSNLPY…RPMFVSPCVD (79 aa)) folds into the RRM 1 domain. Ser-795 and Ser-852 each carry phosphoserine. The 78-residue stretch at 801-878 (HKLFISGLPF…NVIKVAISNP (78 aa)) folds into the RRM 2 domain. A disordered region spans residues 880–962 (QRKVPEKPEV…ADFAKLLLRK (83 aa)). Arg-906 is modified (omega-N-methylarginine).

As to quaternary structure, component of the 7SK snRNP complex at least composed of P-TEFb (composed of CDK9 and CCNT1/cyclin-T1), HEXIM1, HEXIM2, BCDIN3, SART3 proteins and 7SK and U6 snRNAs. Interacts with AGO1 and AGO2. Interacts with PRPF3 and USP4; the interaction with PRPF3 is direct and recruits USP4 to its substrate PRPF3. Interacts with USP15; the interaction is direct. In terms of tissue distribution, ubiquitously expressed, with low level of expression in liver, heart and skeletal. Also detected in hematopoietic cells (at protein level).

It localises to the nucleus. It is found in the nucleoplasm. The protein localises to the cajal body. Its subcellular location is the nucleus speckle. The protein resides in the cytoplasm. Functionally, U6 snRNP-binding protein that functions as a recycling factor of the splicing machinery. Promotes the initial reassembly of U4 and U6 snRNPs following their ejection from the spliceosome during its maturation. Also binds U6atac snRNPs and may function as a recycling factor for U4atac/U6atac spliceosomal snRNP, an initial step in the assembly of U12-type spliceosomal complex. The U12-type spliceosomal complex plays a role in the splicing of introns with non-canonical splice sites. May also function as a substrate-targeting factor for deubiquitinases like USP4 and USP15. Recruits USP4 to ubiquitinated PRPF3 within the U4/U5/U6 tri-snRNP complex, promoting PRPF3 deubiquitination and thereby regulating the spliceosome U4/U5/U6 tri-snRNP spliceosomal complex disassembly. May also recruit the deubiquitinase USP15 to histone H2B and mediate histone deubiquitination, thereby regulating gene expression and/or DNA repair. May play a role in hematopoiesis probably through transcription regulation of specific genes including MYC. This is Spliceosome associated factor 3, U4/U6 recycling protein from Mus musculus (Mouse).